A 132-amino-acid chain; its full sequence is Small ribosomal subunit protein uS11 (132 aa).

The protein belongs to the universal ribosomal protein uS11 family. As to quaternary structure, part of the 30S ribosomal subunit. Interacts with proteins S7 and S18. Binds to IF-3.

Functionally, located on the platform of the 30S subunit, it bridges several disparate RNA helices of the 16S rRNA. Forms part of the Shine-Dalgarno cleft in the 70S ribosome. The chain is Small ribosomal subunit protein uS11 from Chlamydia trachomatis serovar A (strain ATCC VR-571B / DSM 19440 / HAR-13).